Here is a 296-residue protein sequence, read N- to C-terminus: GTPase Era (296 aa).

An Era-type G domain is found at 7-174 (RTGFVAVVGR…LDEIAARLPE (168 aa)). A G1 region spans residues 15-22 (GRPNVGKS). Residue 15–22 (GRPNVGKS) participates in GTP binding. A G2 region spans residues 41 to 45 (QTTRH). A G3 region spans residues 62–65 (DTPG). GTP is bound by residues 62 to 66 (DTPGF) and 123 to 126 (SKID). Residues 123–126 (SKID) form a G4 region. Residues 153–155 (VSA) are G5. A KH type-2 domain is found at 205–281 (VGDELPYGCT…HLEVYIKVRK (77 aa)).

It belongs to the TRAFAC class TrmE-Era-EngA-EngB-Septin-like GTPase superfamily. Era GTPase family. In terms of assembly, monomer.

Its subcellular location is the cytoplasm. The protein resides in the cell inner membrane. Its function is as follows. An essential GTPase that binds both GDP and GTP, with rapid nucleotide exchange. Plays a role in 16S rRNA processing and 30S ribosomal subunit biogenesis and possibly also in cell cycle regulation and energy metabolism. The polypeptide is GTPase Era (Bordetella petrii (strain ATCC BAA-461 / DSM 12804 / CCUG 43448)).